The sequence spans 459 residues: Replication initiator protein (459 aa).

Functionally, essential for pSAM2 replication. In Streptomyces ambofaciens, this protein is Replication initiator protein (repSA).